The chain runs to 137 residues: Ribosome-binding factor A (137 aa).

This sequence belongs to the RbfA family. Monomer. Binds 30S ribosomal subunits, but not 50S ribosomal subunits or 70S ribosomes.

The protein resides in the cytoplasm. Its function is as follows. One of several proteins that assist in the late maturation steps of the functional core of the 30S ribosomal subunit. Associates with free 30S ribosomal subunits (but not with 30S subunits that are part of 70S ribosomes or polysomes). Required for efficient processing of 16S rRNA. May interact with the 5'-terminal helix region of 16S rRNA. The sequence is that of Ribosome-binding factor A from Allorhizobium ampelinum (strain ATCC BAA-846 / DSM 112012 / S4) (Agrobacterium vitis (strain S4)).